Reading from the N-terminus, the 297-residue chain is uncharacterized protein (297 aa).

Disordered stretches follow at residues 12–43 (QNNN…TNDN), 65–85 (VPNS…DKPI), 122–151 (KVST…TNET), and 265–297 (SRLS…DQNN). A compositionally biased stretch (polar residues) spans 65 to 79 (VPNSINVNTSSSGNK). Positions 122-135 (KVSTTTTTTSSTSK) are enriched in low complexity. Residues 140 to 151 (QTITKPNKTNET) are compositionally biased toward polar residues. Low complexity predominate over residues 268 to 287 (SSNNNNNNNNNNNNNNNNSN).

This is an uncharacterized protein from Dictyostelium discoideum (Social amoeba).